The primary structure comprises 129 residues: Phosphoribosyl-AMP cyclohydrolase (129 aa).

Position 84 (D84) interacts with Mg(2+). C85 is a binding site for Zn(2+). D86 and D88 together coordinate Mg(2+). Zn(2+) contacts are provided by C101 and C108.

It belongs to the PRA-CH family. As to quaternary structure, homodimer. Mg(2+) serves as cofactor. Requires Zn(2+) as cofactor.

It localises to the cytoplasm. It catalyses the reaction 1-(5-phospho-beta-D-ribosyl)-5'-AMP + H2O = 1-(5-phospho-beta-D-ribosyl)-5-[(5-phospho-beta-D-ribosylamino)methylideneamino]imidazole-4-carboxamide. Its pathway is amino-acid biosynthesis; L-histidine biosynthesis; L-histidine from 5-phospho-alpha-D-ribose 1-diphosphate: step 3/9. Functionally, catalyzes the hydrolysis of the adenine ring of phosphoribosyl-AMP. This chain is Phosphoribosyl-AMP cyclohydrolase, found in Halobacterium salinarum (strain ATCC 700922 / JCM 11081 / NRC-1) (Halobacterium halobium).